A 57-amino-acid polypeptide reads, in one-letter code: UPF0391 membrane protein RPC_2356 (57 aa).

Transmembrane regions (helical) follow at residues 6–26 (WALI…TGIS) and 35–55 (ILFY…LTIF).

This sequence belongs to the UPF0391 family.

It localises to the cell membrane. The polypeptide is UPF0391 membrane protein RPC_2356 (Rhodopseudomonas palustris (strain BisB18)).